The primary structure comprises 134 residues: UPF0715 membrane protein YoaG (134 aa).

A run of 4 helical transmembrane segments spans residues 9–29, 35–55, 72–92, and 106–126; these read LMTL…YSFV, IIAL…YGLF, VMYL…FFVI, and FYYM…SLIL.

This sequence belongs to the UPF0715 family.

The protein resides in the cell membrane. The sequence is that of UPF0715 membrane protein YoaG (yoaG) from Bacillus subtilis (strain 168).